We begin with the raw amino-acid sequence, 380 residues long: Putative RNA ligase (380 aa).

In terms of biological role, putative RNA ligase. Is able to catalyze the adenylation reaction of ssDNA 3'-terminal phosphate (ssDNA 3'p) to 3'-adenylated DNA (ssDNA 3'pp5'A). This chain is Putative RNA ligase, found in Thermovibrio ammonificans (strain DSM 15698 / JCM 12110 / HB-1).